The chain runs to 455 residues: Adenylyltransferase and sulfurtransferase MOCS3 (455 aa).

ATP is bound by residues G90, D111, 118–122, K135, and 179–180; these read SNLAR and DN. The segment at 156–236 is interaction with NFS1; it reads AQALTPATAL…QPPPAETVTN (81 aa). Residues C220 and C223 each coordinate Zn(2+). The Glycyl thioester intermediate; for adenylyltransferase activity role is filled by C237. Residues C295 and C298 each coordinate Zn(2+). Residues C314 and C322 are joined by a disulfide bond. In terms of domain architecture, Rhodanese spans 345 to 453; sequence SGSPHLLLDV…WAAKVDGTFP (109 aa). The Cysteine persulfide intermediate; for sulfurtransferase activity role is filled by C410. C410 is modified (cysteine persulfide).

In the N-terminal section; belongs to the HesA/MoeB/ThiF family. UBA4 subfamily. As to quaternary structure, interacts with NFS1. It depends on Zn(2+) as a cofactor.

The protein resides in the cytoplasm. It is found in the cytosol. It carries out the reaction [molybdopterin-synthase sulfur-carrier protein]-C-terminal Gly-Gly + ATP + H(+) = [molybdopterin-synthase sulfur-carrier protein]-C-terminal Gly-Gly-AMP + diphosphate. The catalysed reaction is [molybdopterin-synthase sulfur-carrier protein]-C-terminal Gly-Gly-AMP + S-sulfanyl-L-cysteinyl-[cysteine desulfurase] + AH2 = [molybdopterin-synthase sulfur-carrier protein]-C-terminal-Gly-aminoethanethioate + L-cysteinyl-[cysteine desulfurase] + A + AMP + 2 H(+). It functions in the pathway tRNA modification; 5-methoxycarbonylmethyl-2-thiouridine-tRNA biosynthesis. It participates in cofactor biosynthesis; molybdopterin biosynthesis. Functionally, plays a central role in 2-thiolation of mcm(5)S(2)U at tRNA wobble positions of cytosolic tRNA(Lys), tRNA(Glu) and tRNA(Gln). Also essential during biosynthesis of the molybdenum cofactor. Acts by mediating the C-terminal thiocarboxylation of sulfur carriers URM1 and MOCS2A. Its N-terminus first activates URM1 and MOCS2A as acyl-adenylates (-COAMP), then the persulfide sulfur on the catalytic cysteine is transferred to URM1 and MOCS2A to form thiocarboxylation (-COSH) of their C-terminus. The reaction probably involves hydrogen sulfide that is generated from the persulfide intermediate and that acts as a nucleophile towards URM1 and MOCS2A. Subsequently, a transient disulfide bond is formed. Does not use thiosulfate as sulfur donor; NFS1 acting as a sulfur donor for thiocarboxylation reactions. The chain is Adenylyltransferase and sulfurtransferase MOCS3 from Sus scrofa (Pig).